A 532-amino-acid polypeptide reads, in one-letter code: Cytokinin dehydrogenase 8 (532 aa).

An N-terminal signal peptide occupies residues 1 to 26 (MELKAMYLYAAVLAVLLCSSVNFIQS). In terms of domain architecture, FAD-binding PCMH-type spans 51 to 238 (VSDAPFAVMR…TRARIPLQLA (188 aa)). Residues Ala-87, Gly-89, and Gly-91 each contribute to the FAD site. His-92 carries the pros-8alpha-FAD histidine modification. FAD is bound by residues Ser-93, Gln-97, Asp-162, Thr-167, Ser-173, Ile-177, and Ile-228. Asn-420 is a glycosylation site (N-linked (GlcNAc...) asparagine). FAD contacts are provided by Tyr-482 and Gln-520.

It belongs to the oxygen-dependent FAD-linked oxidoreductase family. In terms of assembly, monomer. It depends on FAD as a cofactor.

It localises to the secreted. The protein resides in the extracellular space. The catalysed reaction is N(6)-dimethylallyladenine + A + H2O = 3-methyl-2-butenal + adenine + AH2. Functionally, catalyzes the oxidation of cytokinins, a family of N(6)-substituted adenine derivatives that are plant hormones, where the substituent is an isopentenyl group. In Oryza sativa subsp. indica (Rice), this protein is Cytokinin dehydrogenase 8 (CKX8).